Reading from the N-terminus, the 103-residue chain is Protein RALF-like 18 (103 aa).

The N-terminal stretch at 1–32 (MMNNMKLLIIAVMIISAALLPALVVGSRPVKC) is a signal peptide. Residues 33–58 (DNCMDGGEKEEIMKMSSGVDVSHRIL) constitute a propeptide, removed in mature form. An intrachain disulfide couples Cys-92 to Cys-98.

The protein belongs to the plant rapid alkalinization factor (RALF) family. Proteolytically cleaved, probably by S1P, a subtilisin-like serine protease (subtilase).

It localises to the secreted. In terms of biological role, cell signaling peptide that may regulate plant stress, growth, and development. Mediates a rapid alkalinization of extracellular space by mediating a transient increase in the cytoplasmic Ca(2+) concentration leading to a calcium-dependent signaling events through a cell surface receptor and a concomitant activation of some intracellular mitogen-activated protein kinases. The protein is Protein RALF-like 18 (RALFL18) of Arabidopsis thaliana (Mouse-ear cress).